Consider the following 339-residue polypeptide: Olfactory receptor 7E24 (339 aa).

Residues 1-43 (MSYFPILFFFFLKRCPSYTEPQNLTGVSEFLLLGLSEDPELQP) lie on the Extracellular side of the membrane. A glycan (N-linked (GlcNAc...) asparagine) is linked at asparagine 23. The helical transmembrane segment at 44-64 (VLAGLFLSMYLVTVLGNLLII) threads the bilayer. Residues 65 to 72 (LAVSSDSH) are Cytoplasmic-facing. The chain crosses the membrane as a helical span at residues 73-93 (LHTPMYFFLSNLSLADIGFTS). Topologically, residues 94 to 117 (TTVPKMIVDMQTHSRVISYEGCLT) are extracellular. Residues cysteine 115 and cysteine 207 are joined by a disulfide bond. The chain crosses the membrane as a helical span at residues 118–138 (QMSFFVLFACMDDMLLSVMAY). Residues 139–157 (DRFVAICHPLHYRIIMNPR) lie on the Cytoplasmic side of the membrane. A helical transmembrane segment spans residues 158–178 (LCGFLILLSFFISLLDSQLHN). Topologically, residues 179–215 (LIMLQLTCFKDVDISNFFCDPSQLLHLRCSDTFINEM) are extracellular. A helical transmembrane segment spans residues 216 to 235 (VIYFMGAIFGCLPISGILFS). Residues 236 to 255 (YYKIVSPILRVPTSDGKYKA) are Cytoplasmic-facing. Residues 256 to 276 (FSTCGSHLAVVCLFYGTGLVG) traverse the membrane as a helical segment. At 277-289 (YLSSAVLPSPRKS) the chain is on the extracellular side. Residues 290–310 (MVASVMYTVVTPMLNPFIYSL) traverse the membrane as a helical segment. Over 311–339 (RNKDIQSALCRLHGRIIKSHHLHPFCYMG) the chain is Cytoplasmic.

This sequence belongs to the G-protein coupled receptor 1 family.

It is found in the cell membrane. In terms of biological role, odorant receptor. This is Olfactory receptor 7E24 (OR7E24) from Homo sapiens (Human).